Consider the following 245-residue polypeptide: Platelet-derived growth factor subunit B (245 aa).

Positions 1-20 (MNRCWALFLSLCCYLRLVSA) are cleaved as a signal peptide. The propeptide at 21 to 81 (EGDPIPEELY…ELESLSRGRR (61 aa)) is removed in mature form. A glycan (N-linked (GlcNAc...) asparagine) is linked at Asn63. 3 disulfides stabilise this stretch: Cys101–Cys145, Cys134–Cys182, and Cys138–Cys184. Positions 195–245 (RSPGSSQEQRARTPQTRVTIRTVRVRRPPKGKHQKFKHTHDKKALKETLGA) are cleaved as a propeptide — removed in mature form. The span at 220–235 (RRPPKGKHQKFKHTHD) shows a compositional bias: basic residues. Residues 220 to 245 (RRPPKGKHQKFKHTHDKKALKETLGA) form a disordered region. Residues 236–245 (KKALKETLGA) show a composition bias toward basic and acidic residues.

This sequence belongs to the PDGF/VEGF growth factor family. In terms of assembly, antiparallel homodimer; disulfide-linked. Antiparallel heterodimer with PDGFA; disulfide-linked. The PDGFB homodimer interacts with PDGFRA and PDGFRB homodimers, and with heterodimers formed by PDGFRA and PDGFRB. The heterodimer composed of PDGFA and PDGFB interacts with PDGFRB homodimers, and with heterodimers formed by PDGFRA and PDGFRB. Interacts with XLKD1. Interacts with LRP1. Interacts with SORL1 (via the N-terminal ectodomain). Interacts with CD82; this interaction inhibits PDGFB-mediated signaling pathway.

It localises to the secreted. Functionally, growth factor that plays an essential role in the regulation of embryonic development, cell proliferation, cell migration, survival and chemotaxis. Potent mitogen for cells of mesenchymal origin. Required for normal proliferation and recruitment of pericytes and vascular smooth muscle cells in the central nervous system, skin, lung, heart and placenta. Required for normal blood vessel development, and for normal development of kidney glomeruli. Plays an important role in wound healing. Signaling is modulated by the formation of heterodimers with PDGFA. The protein is Platelet-derived growth factor subunit B (PDGFB) of Felis catus (Cat).